The chain runs to 474 residues: tRNA-2-methylthio-N(6)-dimethylallyladenosine synthase (474 aa).

The region spanning 3–120 is the MTTase N-terminal domain; it reads KKLHIKTWGC…LPEMINHVQG (118 aa). The [4Fe-4S] cluster site is built by Cys-12, Cys-49, Cys-83, Cys-157, Cys-161, and Cys-164. The region spanning 143–375 is the Radical SAM core domain; sequence RADGPTAFVS…QDRITKQAMR (233 aa). One can recognise a TRAM domain in the interval 378–441; it reads RLMLGTVQRI…TNSLRGIVVR (64 aa).

Belongs to the methylthiotransferase family. MiaB subfamily. In terms of assembly, monomer. [4Fe-4S] cluster serves as cofactor.

Its subcellular location is the cytoplasm. The catalysed reaction is N(6)-dimethylallyladenosine(37) in tRNA + (sulfur carrier)-SH + AH2 + 2 S-adenosyl-L-methionine = 2-methylsulfanyl-N(6)-dimethylallyladenosine(37) in tRNA + (sulfur carrier)-H + 5'-deoxyadenosine + L-methionine + A + S-adenosyl-L-homocysteine + 2 H(+). Functionally, catalyzes the methylthiolation of N6-(dimethylallyl)adenosine (i(6)A), leading to the formation of 2-methylthio-N6-(dimethylallyl)adenosine (ms(2)i(6)A) at position 37 in tRNAs that read codons beginning with uridine. The polypeptide is tRNA-2-methylthio-N(6)-dimethylallyladenosine synthase (Pectobacterium atrosepticum (strain SCRI 1043 / ATCC BAA-672) (Erwinia carotovora subsp. atroseptica)).